The primary structure comprises 126 residues: S-adenosylmethionine decarboxylase proenzyme (126 aa).

Serine 63 serves as the catalytic Schiff-base intermediate with substrate; via pyruvic acid. The residue at position 63 (serine 63) is a Pyruvic acid (Ser); by autocatalysis. The active-site Proton acceptor; for processing activity is histidine 68. Cysteine 83 serves as the catalytic Proton donor; for catalytic activity.

The protein belongs to the prokaryotic AdoMetDC family. Type 1 subfamily. Heterotetramer of two alpha and two beta chains arranged as a dimer of alpha/beta heterodimers. Pyruvate is required as a cofactor. Is synthesized initially as an inactive proenzyme. Formation of the active enzyme involves a self-maturation process in which the active site pyruvoyl group is generated from an internal serine residue via an autocatalytic post-translational modification. Two non-identical subunits are generated from the proenzyme in this reaction, and the pyruvate is formed at the N-terminus of the alpha chain, which is derived from the carboxyl end of the proenzyme. The post-translation cleavage follows an unusual pathway, termed non-hydrolytic serinolysis, in which the side chain hydroxyl group of the serine supplies its oxygen atom to form the C-terminus of the beta chain, while the remainder of the serine residue undergoes an oxidative deamination to produce ammonia and the pyruvoyl group blocking the N-terminus of the alpha chain.

It carries out the reaction S-adenosyl-L-methionine + H(+) = S-adenosyl 3-(methylsulfanyl)propylamine + CO2. The protein operates within amine and polyamine biosynthesis; S-adenosylmethioninamine biosynthesis; S-adenosylmethioninamine from S-adenosyl-L-methionine: step 1/1. Functionally, catalyzes the decarboxylation of S-adenosylmethionine to S-adenosylmethioninamine (dcAdoMet), the propylamine donor required for the synthesis of the polyamines spermine and spermidine from the diamine putrescine. In Pelotomaculum thermopropionicum (strain DSM 13744 / JCM 10971 / SI), this protein is S-adenosylmethionine decarboxylase proenzyme.